The primary structure comprises 465 residues: 23S rRNA (uracil(1939)-C(5))-methyltransferase RlmD (465 aa).

Residues 1–22 are disordered; it reads MSEAVPTSARKSKNAPVAPGPA. A TRAM domain is found at 16 to 80; sequence PVAPGPAPVL…PSYEQATVVD (65 aa). C93, C99, C102, and C181 together coordinate [4Fe-4S] cluster. Positions 289, 318, 323, 339, 367, and 388 each coordinate S-adenosyl-L-methionine. The active-site Nucleophile is C421.

This sequence belongs to the class I-like SAM-binding methyltransferase superfamily. RNA M5U methyltransferase family. RlmD subfamily.

It carries out the reaction uridine(1939) in 23S rRNA + S-adenosyl-L-methionine = 5-methyluridine(1939) in 23S rRNA + S-adenosyl-L-homocysteine + H(+). Catalyzes the formation of 5-methyl-uridine at position 1939 (m5U1939) in 23S rRNA. The protein is 23S rRNA (uracil(1939)-C(5))-methyltransferase RlmD of Burkholderia ambifaria (strain ATCC BAA-244 / DSM 16087 / CCUG 44356 / LMG 19182 / AMMD) (Burkholderia cepacia (strain AMMD)).